Consider the following 1060-residue polypeptide: DNA-directed RNA polymerase subunit beta (1060 aa).

This sequence belongs to the RNA polymerase beta chain family. As to quaternary structure, in plastids the minimal PEP RNA polymerase catalytic core is composed of four subunits: alpha, beta, beta', and beta''. When a (nuclear-encoded) sigma factor is associated with the core the holoenzyme is formed, which can initiate transcription.

Its subcellular location is the plastid. The protein resides in the chloroplast. The enzyme catalyses RNA(n) + a ribonucleoside 5'-triphosphate = RNA(n+1) + diphosphate. Functionally, DNA-dependent RNA polymerase catalyzes the transcription of DNA into RNA using the four ribonucleoside triphosphates as substrates. In Helianthus annuus (Common sunflower), this protein is DNA-directed RNA polymerase subunit beta.